A 357-amino-acid polypeptide reads, in one-letter code: Protein pelota homolog (357 aa).

Belongs to the eukaryotic release factor 1 family. Pelota subfamily. Monomer. A divalent metal cation serves as cofactor.

Its subcellular location is the cytoplasm. Its function is as follows. May function in recognizing stalled ribosomes, interact with stem-loop structures in stalled mRNA molecules, and effect endonucleolytic cleavage of the mRNA. May play a role in the release non-functional ribosomes and degradation of damaged mRNAs. Has endoribonuclease activity. The protein is Protein pelota homolog of Thermococcus onnurineus (strain NA1).